Here is a 369-residue protein sequence, read N- to C-terminus: Fructose-bisphosphate aldolase (369 aa).

D40 contributes to the dihydroxyacetone phosphate binding site. D-glyceraldehyde 3-phosphate contacts are provided by S42 and T45. R49 provides a ligand contact to beta-D-fructose 1,6-bisphosphate. D-glyceraldehyde 3-phosphate is bound at residue K113. K152 provides a ligand contact to dihydroxyacetone phosphate. E195 is a binding site for D-glyceraldehyde 3-phosphate. The active-site Proton acceptor is E195. Residues K237, S279, and G280 each coordinate dihydroxyacetone phosphate. The active-site Schiff-base intermediate with dihydroxyacetone phosphate is the K237. Residues 279 to 281 and S307 contribute to the beta-D-fructose 1,6-bisphosphate site; that span reads SGG. Residues G309 and R310 each coordinate dihydroxyacetone phosphate. R310 is a beta-D-fructose 1,6-bisphosphate binding site.

Belongs to the class I fructose-bisphosphate aldolase family. Homotetramer. Interacts with TRAP (via cytoplasmic domain); the interaction prevents substrate binding and thereby inhibits aldolase activity. Interacts with MTRAP (via cytoplasmic domain); MTRAP phosphorylation may increase the binding to FBPA. Interact with RH1 (via cytoplasmic domain). Interacts with RH2b (via cytoplasmic domain). Interacts with RH4 (via cytoplasmic domain). Interacts with AMA1 (via cytoplasmic domain); the interaction is weak, however it may be increased upon AMA1 phosphorylation. Interacts with EBA140 (via cytoplasmic domain); the interaction is weak. Interacts with EBA175 (via cytoplasmic domain); the interaction is weak. Interacts with EBA181 (via cytoplasmic domain); the interaction is weak. Interacts with G-actin and F-actin. May interact with ACT2/actin II; the interaction inhibits FBPA catalytic activity. Interacts with human SLC4A1/band 3 (via N-terminus); the interaction inhibits FBPA catalytic activity.

The protein localises to the cytoplasm. Its subcellular location is the membrane. The protein resides in the host cell membrane. The catalysed reaction is beta-D-fructose 1,6-bisphosphate = D-glyceraldehyde 3-phosphate + dihydroxyacetone phosphate. Its pathway is carbohydrate degradation; glycolysis; D-glyceraldehyde 3-phosphate and glycerone phosphate from D-glucose: step 4/4. With respect to regulation, the cytoplasmic tail of TRAP and probably other adhesins acts as a competitive inhibitor as the binding sites of the glycolytic substrate fructose 1,6-bisphosphate and TRAP partially overlap. Functionally, plays a key role in glycolysis by catalyzing the cleavage of fructose 1,6-bisphosphate into dihydroxyacetone phosphate and glyceraldehyde 3-phosphate. Independently of its catalytic activity, connects the actin filaments, and thus the actomyosin motor, to cell surface adhesins of the thrombospondin-related anonymous protein (TRAP), the erythrocyte binding ligand (EBL) and reticulocyte binding homolog (RH) protein families; this interaction is probably involved in transducing the motor force across the parasite surface required for sporozoite and ookinete gliding motility and merozoite invasion. Stimulates actin polymerisation. The protein is Fructose-bisphosphate aldolase of Plasmodium falciparum (isolate 3D7).